A 975-amino-acid chain; its full sequence is Ionotropic receptor 21a (975 aa).

A signal peptide spans 1–21; that stretch reads MFKRIVLAVINLVFLIVSTTA. 3 N-linked (GlcNAc...) asparagine glycosylation sites follow: asparagine 67, asparagine 177, and asparagine 355. The chain crosses the membrane as a helical span at residues 433–453; the sequence is WPVWVAVILIYLLAIFPLAFS. N-linked (GlcNAc...) asparagine glycosylation is present at asparagine 464. The chain crosses the membrane as a helical span at residues 505 to 525; sequence IYWVFTIIITACYTGSIIAFI. N-linked (GlcNAc...) asparagine glycosylation is found at asparagine 561, asparagine 586, and asparagine 611. The chain crosses the membrane as a helical span at residues 708–728; sequence MFLLMLFGYVVALGVLISEWV. Disordered stretches follow at residues 757-839 and 911-938; these read ATAG…HSLS and SPHS…RKEM. Polar residues-rich tracts occupy residues 760–777 and 788–800; these read GSDN…TNRN and VENS…NGSA. Residues asparagine 763 and asparagine 797 are each glycosylated (N-linked (GlcNAc...) asparagine).

The protein belongs to the glutamate-gated ion channel (TC 1.A.10.1) family. As to expression, in both female and male antenna, expressed specifically in 3 sensory neurons of flagellomere 13 segment (at protein level).

It is found in the cell projection. Its subcellular location is the cilium membrane. Integral part of a neural sensory system in the antenna that provides the neural basis for the response to environmental changes in temperature (thermosensation). Specifically, required for thermosensing by the cooling cell. Plays a role in heat seeking and heat-stimulated blood feeding behavior. The protein is Ionotropic receptor 21a of Anopheles gambiae (African malaria mosquito).